The following is a 457-amino-acid chain: Cyanidin 3-O-galactoside 2''-O-xylosyltransferase FGGT1 (457 aa).

Belongs to the UDP-glycosyltransferase family. Expressed in ovaries.

It carries out the reaction cyanidin 3-O-beta-D-galactoside + UDP-alpha-D-xylose = cyanidin 3-O-[beta-D-xylosyl-(1-&gt;2)-beta-D-galactoside] + UDP + H(+). The protein operates within pigment biosynthesis; anthocyanin biosynthesis. Xylosyltransferase involved in anthocyanin biosynthesis by catalyzing the xylosylation of cyanidin 3-O-galactoside to form cyanidin 3-O-[2-O-(-xylosyl)-galactoside]. Required for the accumulation of anthocyanin in red-fleshed kiwifruit varieties. In Actinidia chinensis var. chinensis (Chinese soft-hair kiwi), this protein is Cyanidin 3-O-galactoside 2''-O-xylosyltransferase FGGT1.